The sequence spans 2206 residues: MGAQVSSQKVGAHENSNRAYGGSTINYTTINYYKDSASNAASKQDYSQDPSKFTEPLKDVLIKTAPALNSPNVEACGYSDRVLQLTLGNSTITTQEAANSVVAYGRWPEFIRDDEANPVDQPTEPDVATCRFYTLDTVMWGKESKGWWWKLPDALRDMGLFGQNMYYHYLGRSGYTVHVQCNASKFHQGALGVFAIPEYCLAGDSDKQRYTSYANANPGERGGKFYSQFNKDNAVTSPKREFCPVDYLLGCGVLLGNAFVYPHQIINLRTNNSATIVLPYVNALAIDSMVKHNNWGIAILPLSPLDFAQDSSVEIPITVTIAPMCSEFNGLRNVTAPKFQGLPVLNTPGSNQYLTSDNHQSPCAIPEFDVTPPIDIPGEVKNMMELAEIDTMIPLNLESTKRNTMDMYRVTLSDSADLSQPILCLSLSPASDPRLSHTMLGEVLNYYTHWAGSLKFTFLFCGSMMATGKILVAYAPPGAQPPTSRKEAMLGTHVIWDLGLQSSCTMVVPWISNVTYRQTTQDSFTEGGYISMFYQTRIVVPLSTPKSMSMLGFVSACNDFSVRLLRDTTHISQSALPQGIEDLISEVAQGALTLSLPKQQDSLPDTKASGPAHSKEVPALTAVETGATNPLAPSDTVQTRHVVQRRSRSESTIESFFARGACVAIIEVDNEQPTTRAQKLFAMWRITYKDTVQLRRKLEFFTYSRFDMEFTFVVTANFTNANNGHALNQVYQIMYIPPGAPTPKSWDDYTWQTSSNPSIFYTYGAAPARISVPYVGLANAYSHFYDGFAKVPLKTDANDQIGDSLYSAMTVDDFGVLAVRVVNDHNPTKVTSKVRIYMKPKHVRVWCPRPPRAVPYYGPGVDYKNNLDPLSEKGLTTYGFGHQNKAVYTAGYKICNYHLATKEDLQNTVSIMWNRDLLVVESKAQGTDSIARCNCNAGVYYCESRRKYYPVSFVGPTFQYMEANDYYPARYQSHMLIGHGFASPGDCGGILRCQHGVIGIVTAGGEGLVAFSDIRDLYAYEEEAMEQGISNYIESLGAAFGSGFTQQIGDKISELTSMVTSTITEKLLKNLIKIISSLVIITRNYEDTTTVLATLALLGCDVSPWQWLKKKACDTLEIPYVIRQGDSWLKKFTEACNAAKGLEWVSNKISKFIDWLRERIIPQARDKLEFVTKLKQLEMLENQISTIHQSCPSQEHQEILFNNVRWLSIQSKRFAPLYALEAKRIQKLEHTINNYIQFKSKHRIEPVCLLVHGSPGTGKSVATNLIARAIAEKENTSTYSLPPDPSHFDGYKQQGVVIMDDLNQNPDGADMKLFCQMVSTVEFIPPMASLEEKGILFTSNYVLASTNSSRITPPTVAHSDALARRFAFDMDIQVMGEYSRDGKLNMAMATETCKDCHQPANFKRCCPLVCGKAIQLMDKSSRVRYSVDQITTMIINERNRRSNIGNCMEALFQGPLQYKDLKIDIKTRPPPECINDLLQAVDSQEVRDYCEKKGWIVNITSQVQTERNINRAMTILQAVTTFAAVAGVVYVMYKLFAGHQGAYTGLPNKRPNVPTIRAAKVQGPGFDYAVAMAKRNIVTATTSKGEFTMLGVHDNVAILPTHASPGESIVIDGKEVEILDAKALEDQAGTNLEITIITLKRNEKFRDIRQHIPTQITETNDGVLIVNTSKYPNMYVPVGAVTEQGYLNLGGRQTARILMYNFPTRAGQCGGVITCTGKVIGMHVGGNGSHGFAAALKRSYFTQSQGEIQWMRPSKEAGYPIINAPTKTKLEPSAFHYVFEGVKEPAVLTKNDPRLKTDFEEAIFSKYVGNKITEVDEYMKEAVDHYAGQLMSLDISTEQMCLEDAMYGTDGLEALDLSTSAGYPYVAMGKKKRDILNKQTRDTKEMQRLLDAYGINLPLVTYVKDELRSKTKVEQGKSRLIEASSLNDSVAMRMAFGNLYAAFHRNPGVVTGSAVGCDPDLFWSKIPVLMEEKLFAFDYTGYDASLSPAWFEALKMVLEKIGFGDRVDYIDYLNHSHHLYKNKIYCVKGGMPSGCSGTSIFNSMINNLIIRTLLLKTYKGIDLDHLKMIAYGDDVIASYPHEVDASLLAQSGKDYGLTMTPADKSATFETVTWENVTFLKRFFRADEKYPFLIHPVMPMKEIHESIRWTKDPRNTQDHVRSLCLLAWHNGEEEYNKFLAKIRSVPIGRALLLPEYSTLYRRWLDSF.

The N-myristoyl glycine; by host moiety is linked to residue Gly-2. Topologically, residues 2–1517 (GAQVSSQKVG…NINRAMTILQ (1516 aa)) are cytoplasmic. 2 amphipathic alpha-helix regions span residues 579-599 (GIED…LPKQ) and 579-603 (GIED…QDSL). Residues His-898 and Asp-916 each act as for protease 2A activity in the active site. The Zn(2+) site is built by Cys-933 and Cys-935. Cys-987 acts as the For protease 2A activity in catalysis. Cys-993 and His-995 together coordinate Zn(2+). Positions 1125–1197 (GDSWLKKFTE…HQSCPSQEHQ (73 aa)) are membrane-binding. The oligomerization stretch occupies residues 1125-1263 (GDSWLKKFTE…SPGTGKSVAT (139 aa)). Residues 1146–1150 (SNKIS) form an RNA-binding region. The 157-residue stretch at 1229–1385 (EHTINNYIQF…GEYSRDGKLN (157 aa)) folds into the SF3 helicase domain. Residue 1253 to 1260 (GSPGTGKS) coordinates ATP. Zn(2+) contacts are provided by Cys-1393, Cys-1396, Cys-1405, and Cys-1410. The C4-type zinc-finger motif lies at 1393–1410 (CKDCHQPANFKRCCPLVC). The tract at residues 1437 to 1444 (ERNRRSNI) is RNA-binding. Positions 1448–1453 (MEALFQ) are oligomerization. Residues 1518-1533 (AVTTFAAVAGVVYVMY) lie within the membrane without spanning it. At 1534-2206 (KLFAGHQGAY…TLYRRWLDSF (673 aa)) the chain is on the cytoplasmic side. Tyr-1543 carries the post-translational modification O-(5'-phospho-RNA)-tyrosine. The Peptidase C3 domain maps to 1563–1741 (GPGFDYAVAM…FAAALKRSYF (179 aa)). Active-site for protease 3C activity residues include His-1602, Glu-1633, and Cys-1709. Residues 1972–2087 (EKLFAFDYTG…SYPHEVDASL (116 aa)) form the RdRp catalytic domain. Residues Asp-1978 and Asp-2073 each coordinate Mg(2+).

Belongs to the picornaviruses polyprotein family. In terms of assembly, interacts with capsid protein VP1 and capsid protein VP3 to form heterotrimeric protomers. As to quaternary structure, interacts with capsid protein VP0, and capsid protein VP3 to form heterotrimeric protomers. Interacts with human PVR. Five protomers subsequently associate to form pentamers which serve as building blocks for the capsid. Interacts with capsid protein VP2, capsid protein VP3 and capsid protein VP4 following cleavage of capsid protein VP0. Interacts with capsid protein VP1 and capsid protein VP3 in the mature capsid. In terms of assembly, interacts with capsid protein VP0 and capsid protein VP1 to form heterotrimeric protomers. Five protomers subsequently associate to form pentamers which serve as building blocks for the capsid. Interacts with capsid protein VP4 in the mature capsid. Interacts with protein 2C; this interaction may be important for virion morphogenesis. As to quaternary structure, interacts with capsid protein VP1 and capsid protein VP3. Homodimer. In terms of assembly, homohexamer; forms a hexameric ring structure with 6-fold symmetry characteristic of AAA+ ATPases. Interacts (via N-terminus) with host RTN3 (via reticulon domain); this interaction is important for viral replication. Interacts with capsid protein VP3; this interaction may be important for virion morphogenesis. As to quaternary structure, interacts with protein 3CD. Homodimer. Interacts with host GBF1. Interacts (via GOLD domain) with host ACBD3 (via GOLD domain); this interaction allows the formation of a viral protein 3A/ACBD3 heterotetramer with a 2:2 stoichiometry, which will stimulate the recruitment of host PI4KB in order to synthesize PI4P at the viral RNA replication sites. In terms of assembly, interacts with RNA-directed RNA polymerase. As to quaternary structure, interacts with protein 3AB and with RNA-directed RNA polymerase. Interacts with Viral protein genome-linked and with protein 3CD. Mg(2+) is required as a cofactor. Post-translationally, specific enzymatic cleavages in vivo by the viral proteases yield processing intermediates and the mature proteins. Myristoylation is required for the formation of pentamers during virus assembly. Further assembly of 12 pentamers and a molecule of genomic RNA generates the provirion. In terms of processing, during virion maturation, immature virions are rendered infectious following cleavage of VP0 into VP4 and VP2. This maturation seems to be an autocatalytic event triggered by the presence of RNA in the capsid and it is followed by a conformational change infectious virion. Post-translationally, myristoylation is required during RNA encapsidation and formation of the mature virus particle. VPg is uridylylated by the polymerase into VPg-pUpU. This acts as a nucleotide-peptide primer for the genomic RNA replication.

It is found in the virion. The protein resides in the host cytoplasm. Its subcellular location is the host cytoplasmic vesicle membrane. The protein localises to the host nucleus. The enzyme catalyses a ribonucleoside 5'-triphosphate + H2O = a ribonucleoside 5'-diphosphate + phosphate + H(+). It carries out the reaction Selective cleavage of Tyr-|-Gly bond in the picornavirus polyprotein.. The catalysed reaction is RNA(n) + a ribonucleoside 5'-triphosphate = RNA(n+1) + diphosphate. It catalyses the reaction Selective cleavage of Gln-|-Gly bond in the poliovirus polyprotein. In other picornavirus reactions Glu may be substituted for Gln, and Ser or Thr for Gly.. Replication or transcription is subject to high level of random mutations by the nucleotide analog ribavirin. Forms an icosahedral capsid of pseudo T=3 symmetry with capsid proteins VP2 and VP3. The capsid is 300 Angstroms in diameter, composed of 60 copies of each capsid protein and enclosing the viral positive strand RNA genome. Capsid protein VP1 mainly forms the vertices of the capsid. Capsid protein VP1 interacts with host cell receptor PVR to provide virion attachment to target host cells. This attachment induces virion internalization predominantly through clathrin- and caveolin-independent endocytosis in Hela cells and through caveolin-mediated endocytosis in brain microvascular endothelial cells. Tyrosine kinases are probably involved in the entry process. Virus binding to PVR induces increased junctional permeability and rearrangement of junctional proteins. Modulation of endothelial tight junctions, as well as cytolytic infection of endothelial cells themselves, may result in loss of endothelial integrity which may help the virus to reach the CNS. After binding to its receptor, the capsid undergoes conformational changes. Capsid protein VP1 N-terminus (that contains an amphipathic alpha-helix) and capsid protein VP4 are externalized. Together, they shape a pore in the host membrane through which viral genome is translocated to host cell cytoplasm. In terms of biological role, forms an icosahedral capsid of pseudo T=3 symmetry with capsid proteins VP2 and VP3. The capsid is 300 Angstroms in diameter, composed of 60 copies of each capsid protein and enclosing the viral positive strand RNA genome. Its function is as follows. Lies on the inner surface of the capsid shell. After binding to the host receptor, the capsid undergoes conformational changes. Capsid protein VP4 is released, Capsid protein VP1 N-terminus is externalized, and together, they shape a pore in the host membrane through which the viral genome is translocated into the host cell cytoplasm. Functionally, component of immature procapsids, which is cleaved into capsid proteins VP4 and VP2 after maturation. Allows the capsid to remain inactive before the maturation step. Cysteine protease that cleaves viral polyprotein and specific host proteins. It is responsible for the autocatalytic cleavage between the P1 and P2 regions, which is the first cleavage occurring in the polyprotein. Also cleaves the host translation initiation factor EIF4G1, in order to shut down the capped cellular mRNA translation. Inhibits the host nucleus-cytoplasm protein and RNA trafficking by cleaving host members of the nuclear pores including NUP98, NUP62 and NUP153. Counteracts stress granule formation probably by antagonizing its assembly or promoting its dissassembly. Cleaves and inhibits host IFIH1/MDA5, thereby inhibiting the type-I IFN production and the establishment of the antiviral state. Cleaves and inhibits host MAVS, thereby inhibiting the type-I IFN production and the establishment of the antiviral state. In terms of biological role, plays an essential role in the virus replication cycle by acting as a viroporin. Creates a pore in the host endoplasmic reticulum and as a consequence releases Ca2+ in the cytoplasm of infected cell. In turn, high levels of cytoplasmic calcium may trigger membrane trafficking and transport of viral ER-associated proteins to viroplasms, sites of viral genome replication. Its function is as follows. Induces and associates with structural rearrangements of intracellular membranes. Displays RNA-binding, nucleotide binding and NTPase activities. May play a role in virion morphogenesis and viral RNA encapsidation by interacting with the capsid protein VP3. Functionally, localizes the viral replication complex to the surface of membranous vesicles. Together with protein 3CD binds the Cis-Active RNA Element (CRE) which is involved in RNA synthesis initiation. Acts as a cofactor to stimulate the activity of 3D polymerase, maybe through a nucleid acid chaperone activity. Localizes the viral replication complex to the surface of membranous vesicles. It inhibits host cell endoplasmic reticulum-to-Golgi apparatus transport and causes the disassembly of the Golgi complex, possibly through GBF1 interaction. This would result in depletion of MHC, trail receptors and IFN receptors at the host cell surface. Plays an essential role in viral RNA replication by recruiting ACBD3 and PI4KB at the viral replication sites, thereby allowing the formation of the rearranged membranous structures where viral replication takes place. In terms of biological role, acts as a primer for viral RNA replication and remains covalently bound to viral genomic RNA. VPg is uridylylated prior to priming replication into VPg-pUpU. The oriI viral genomic sequence may act as a template for this. The VPg-pUpU is then used as primer on the genomic RNA poly(A) by the RNA-dependent RNA polymerase to replicate the viral genome. During genome replication, the VPg-RNA linkage is removed by the host TDP2, thereby accelerating replication. During the late stage of the replication cycle, host TDP2 is excluded from sites of viral RNA synthesis and encapsidation, allowing for the generation of progeny virions. Its function is as follows. Involved in the viral replication complex and viral polypeptide maturation. It exhibits protease activity with a specificity and catalytic efficiency that is different from protease 3C. Protein 3CD lacks polymerase activity. Protein 3CD binds to the 5'UTR of the viral genome. Functionally, major viral protease that mediates proteolytic processing of the polyprotein. Cleaves host EIF5B, contributing to host translation shutoff. Also cleaves host PABPC1, contributing to host translation shutoff. Cleaves host RIGI and thus contributes to the inhibition of type I interferon production. Cleaves host NLRP1, triggers host N-glycine-mediated degradation of the autoinhibitory NLRP1 N-terminal fragment. Inhibits the integrated stress response (ISR) in the infected cell by cleaving host G3BP1. Stress granule formation is thus inhibited, which allows protein synthesis and viral replication. Replicates the viral genomic RNA on the surface of intracellular membranes. May form linear arrays of subunits that propagate along a strong head-to-tail interaction called interface-I. Covalently attaches UMP to a tyrosine of VPg, which is used to prime RNA synthesis. The positive stranded RNA genome is first replicated at virus induced membranous vesicles, creating a dsRNA genomic replication form. This dsRNA is then used as template to synthesize positive stranded RNA genomes. ss(+)RNA genomes are either translated, replicated or encapsidated. The chain is Genome polyprotein from Poliovirus type 3 (strains P3/Leon/37 and P3/Leon 12A[1]B).